The following is a 141-amino-acid chain: Cystatin-S (141 aa).

A signal peptide spans 1 to 20 (MARPLCTLLLLMATLAGALA). Phosphoserine is present on residues S21 and S23. The short motif at 76 to 80 (QTFGG) is the Secondary area of contact element. Cystine bridges form between C94/C104 and C118/C138.

The protein belongs to the cystatin family. In terms of processing, phosphorylated at both its N- and C-terminal regions. Expressed in submandibular and sublingual saliva but not in parotid saliva (at protein level). Expressed in saliva, tears, urine and seminal fluid.

Its subcellular location is the secreted. Its function is as follows. This protein strongly inhibits papain and ficin, partially inhibits stem bromelain and bovine cathepsin C, but does not inhibit porcine cathepsin B or clostripain. Papain is inhibited non-competitively. The chain is Cystatin-S (CST4) from Homo sapiens (Human).